The primary structure comprises 345 residues: Trace amine-associated receptor 6 (345 aa).

Residues 1 to 32 (MGSNSSPPTVLQLCYENVTGSCVKTPYSPGSR) lie on the Extracellular side of the membrane. An N-linked (GlcNAc...) asparagine glycan is attached at N17. 2 disulfides stabilise this stretch: C22–C186 and C105–C190. The helical transmembrane segment at 33–53 (VILYAVFGFGAVLAVFGNLMV) threads the bilayer. Residues 54 to 68 (MISILHFKQLHSPTN) are Cytoplasmic-facing. A helical transmembrane segment spans residues 69–89 (FLIASLACADFGVGISVMPFS). Topologically, residues 90 to 107 (MVRSIESCWYFGRSFCTF) are extracellular. A helical membrane pass occupies residues 108 to 128 (HTCCDVAFCYSSLFHLSFISI). At 129–147 (DRYIAVTDPLVYPTKFTVS) the chain is on the cytoplasmic side. The chain crosses the membrane as a helical span at residues 148-168 (VSGICIGVSWILPLVYSGAVF). Over 169–202 (YTGVYDDGLEELSSALNCVGGCQVVVNQNWVLID) the chain is Extracellular. The extracellular Loop 2 (ECL2) stretch occupies residues 174–187 (DDGLEELSSALNCV). A helical membrane pass occupies residues 203-223 (FLSFLIPTLVMIILYGNIFLV). Residues 224–259 (ARQQAKKIENIGSKTESSSESYKARVARRERKAAKT) lie on the Cytoplasmic side of the membrane. The helical transmembrane segment at 260 to 276 (LGITVVAFMISWLPYSI) threads the bilayer. Topologically, residues 277–282 (DSLVDA) are extracellular. A helical transmembrane segment spans residues 283–302 (FMGFITPAYIYEICVWCAYY). At 303–345 (NSAMNPLIYALFYPWFKKAIKVIMSGQVFKNSSATMNLFSEQI) the chain is on the cytoplasmic side.

This sequence belongs to the G-protein coupled receptor 1 family. As to expression, specifically expressed in neurons of the olfactory epithelium, to discrete glomeruli predominantly localized to a confined bulb region. Present in a ventral area of the main olfactory epithelium.

It localises to the cell membrane. In terms of biological role, olfactory receptor specific for trace amines, such as beta-phenylethylamine (beta-PEA). Trace amine compounds are enriched in animal body fluids and act on trace amine-associated receptors (TAARs) to elicit both intraspecific and interspecific innate behaviors. Beta-PEA-binding causes a conformation change that triggers signaling via G(s)-class of G alpha proteins (GNAL or GNAS). The chain is Trace amine-associated receptor 6 from Mus musculus (Mouse).